We begin with the raw amino-acid sequence, 278 residues long: DNA-directed RNA polymerase subunit alpha (278 aa).

Belongs to the RNA polymerase alpha chain family. In plastids the minimal PEP RNA polymerase catalytic core is composed of four subunits: alpha, beta, beta', and beta''. When a (nuclear-encoded) sigma factor is associated with the core the holoenzyme is formed, which can initiate transcription.

Its subcellular location is the plastid. The protein resides in the chloroplast. The enzyme catalyses RNA(n) + a ribonucleoside 5'-triphosphate = RNA(n+1) + diphosphate. Its function is as follows. DNA-dependent RNA polymerase catalyzes the transcription of DNA into RNA using the four ribonucleoside triphosphates as substrates. The polypeptide is DNA-directed RNA polymerase subunit alpha (rpoA) (Chlorella vulgaris (Green alga)).